The chain runs to 459 residues: Cysteine--tRNA ligase (459 aa).

C31 is a Zn(2+) binding site. The short motif at 33–43 is the 'HIGH' region element; sequence PTVYDNPHIGN. Zn(2+)-binding residues include C216, H241, and E245. A 'KMSKS' region motif is present at residues 274–278; the sequence is KMSKS. Position 277 (K277) interacts with ATP.

It belongs to the class-I aminoacyl-tRNA synthetase family. Monomer. Zn(2+) is required as a cofactor.

It localises to the cytoplasm. It catalyses the reaction tRNA(Cys) + L-cysteine + ATP = L-cysteinyl-tRNA(Cys) + AMP + diphosphate. In Rickettsia felis (strain ATCC VR-1525 / URRWXCal2) (Rickettsia azadi), this protein is Cysteine--tRNA ligase.